The primary structure comprises 726 residues: MSSRTLVGLRSTTSTHLQRSGVAAAAAVSSSSTSSSGSAPRRCLSSASGRQVQQSAEFSSSSKSWDRLGRRAKEKLLDREFFLSLLNSASTKREAKSYLARLKAQHQGTPPLKPAAKQPGVAEAAAPVSSGASSTSFYGASRSVYDSPVFRHDSTPTPPLQDVSERLHLALVKITTPQLLDDSTVNGVAKTLSQLNRLGMACCVVVDPGTAGDSNQLRRIAAEQADRISTAVDAQPDSKSAHIDSVLSVSALNPEAPKVLSRKLLLGPLRDGHIVVLAPIAYTEDVPRAVTVSASDAILALTKELAGLATNPDPDEDPIRTAQRIAGLQEEVSLDRVILLDPLGGIPAFSGPQTSHVFINMEQEFDDIENELLRVWQSAASAKNNLPEEGLPSIADSNPLSKFADTEVVPVPPSQKAYSSDLTLGTSMVEGHINNLRLSQAALAMLPSASSSIITSPLEVANSAQSPGGASPDVSAVGTRRQRNPLIHNLLTDKPLLSSSLPLSRRAALNGRRDSIATQPSHTTFVKRGMPLTIIPNPWLSPWTAKDRPRLGLDDPSIDLPRLVHLIEDSFNRKLDVQDYLNRVNGRLAGLIIAGEYEGGAILTWELPPGVEDDGSEASQARMVPYLDKFAVLKRSQGAGGVADIVFNAMVRSCFPNGVCWRSRKDNPVNKWYFERSQGTWKLSDMNWTMFWTTPGLTEDSQKFRDYEAVCRSIQPSWADDTGVVD.

Over residues 1 to 18 (MSSRTLVGLRSTTSTHLQ) the composition is skewed to polar residues. A mitochondrion-targeting transit peptide spans 1-44 (MSSRTLVGLRSTTSTHLQRSGVAAAAAVSSSSTSSSGSAPRRCL). Residues 1–64 (MSSRTLVGLR…SAEFSSSSKS (64 aa)) are disordered. Residues 20-39 (SGVAAAAAVSSSSTSSSGSA) show a composition bias toward low complexity. A compositionally biased stretch (polar residues) spans 45-58 (SSASGRQVQQSAEF). Residues 547–716 (DRPRLGLDDP…YEAVCRSIQP (170 aa)) form the N-acetyltransferase domain.

It belongs to the acetyltransferase family.

The protein localises to the mitochondrion. It carries out the reaction L-glutamate + acetyl-CoA = N-acetyl-L-glutamate + CoA + H(+). The protein operates within amino-acid biosynthesis; L-arginine biosynthesis; N(2)-acetyl-L-ornithine from L-glutamate: step 1/4. In terms of biological role, N-acetylglutamate synthase involved in arginine biosynthesis. The sequence is that of Amino-acid acetyltransferase, mitochondrial (arg2) from Aspergillus niger (strain ATCC MYA-4892 / CBS 513.88 / FGSC A1513).